The sequence spans 425 residues: ATP-dependent RNA helicase RhlB (425 aa).

Residues 9–37 (TRFADLALHPKIQQAISSAGFEYCTPIQA) carry the Q motif motif. In terms of domain architecture, Helicase ATP-binding spans 40–218 (LPVALSNRDV…YEHMNAPTKL (179 aa)). An ATP-binding site is contributed by 53–60 (AQTGTGKT). Residues 164–167 (DEAD) carry the DEAD box motif. In terms of domain architecture, Helicase C-terminal spans 242 to 389 (KFPLLLTLIE…VTKYDGDALL (148 aa)). The tract at residues 391–425 (DLRRPRPIQRRRRHNSGGGKGKPRGRRSGPPRNAS) is disordered. Basic residues predominate over residues 395–419 (PRPIQRRRRHNSGGGKGKPRGRRSG).

The protein belongs to the DEAD box helicase family. RhlB subfamily. Component of the RNA degradosome, which is a multiprotein complex involved in RNA processing and mRNA degradation.

It is found in the cytoplasm. The catalysed reaction is ATP + H2O = ADP + phosphate + H(+). Functionally, DEAD-box RNA helicase involved in RNA degradation. Has RNA-dependent ATPase activity and unwinds double-stranded RNA. The polypeptide is ATP-dependent RNA helicase RhlB (Idiomarina loihiensis (strain ATCC BAA-735 / DSM 15497 / L2-TR)).